A 311-amino-acid chain; its full sequence is Lipoyl synthase (311 aa).

Cys-36, Cys-41, Cys-47, Cys-66, Cys-70, Cys-73, and Ser-280 together coordinate [4Fe-4S] cluster. The Radical SAM core domain maps to 51 to 269 (RDGPGTATFM…RVAESEFGFL (219 aa)).

It belongs to the radical SAM superfamily. Lipoyl synthase family. [4Fe-4S] cluster is required as a cofactor.

It localises to the cytoplasm. The catalysed reaction is [[Fe-S] cluster scaffold protein carrying a second [4Fe-4S](2+) cluster] + N(6)-octanoyl-L-lysyl-[protein] + 2 oxidized [2Fe-2S]-[ferredoxin] + 2 S-adenosyl-L-methionine + 4 H(+) = [[Fe-S] cluster scaffold protein] + N(6)-[(R)-dihydrolipoyl]-L-lysyl-[protein] + 4 Fe(3+) + 2 hydrogen sulfide + 2 5'-deoxyadenosine + 2 L-methionine + 2 reduced [2Fe-2S]-[ferredoxin]. The protein operates within protein modification; protein lipoylation via endogenous pathway; protein N(6)-(lipoyl)lysine from octanoyl-[acyl-carrier-protein]: step 2/2. Catalyzes the radical-mediated insertion of two sulfur atoms into the C-6 and C-8 positions of the octanoyl moiety bound to the lipoyl domains of lipoate-dependent enzymes, thereby converting the octanoylated domains into lipoylated derivatives. This Halobacterium salinarum (strain ATCC 29341 / DSM 671 / R1) protein is Lipoyl synthase.